The following is a 356-amino-acid chain: MDVLRPQIVTFDGRNYRKNPIQEKQYQHEEDEDFYPDSMEYSDEPCGAYEVAQTPHGFRATVSAPSLLYKHIVGKRGDTKKKIEVETKTSINIPKHGHEGEIVITGQHRNGVVSARTRIDVLLDTFRRRQPFTHFLSFFLNEVEVQERFLMFQEEVLRKCSKDRGVDSTIFQNPKKLHLTIGMLVLLSEQEIQQTCEILQRCKEEFINDISGGRPLEVEMAGIEYMNDDPAMVDVLYAKVHMKDGSNRLQELVDRVLERFQSLGLIVKEWTSVKLHATVMNTLLRKDPNAEGRYNLYTADGKYIFKERESFDGRNILKTFENFYFGSLRLNSIHISQRFTVDSFGNYASCGHVDFS.

A required for interaction with ASCC3 region spans residues 1 to 52; sequence MDVLRPQIVTFDGRNYRKNPIQEKQYQHEEDEDFYPDSMEYSDEPCGAYEVA. The KH domain occupies 57-119; the sequence is GFRATVSAPS…NGVVSARTRI (63 aa).

As to quaternary structure, identified in the ASCC complex that contains ASCC1, ASCC2 and ASCC3. Interacts directly with ASCC3. The ASCC complex interacts with ALKBH3. Part of the ASC-1 complex, that contains TRIP4, ASCC1, ASCC2 and ASCC3. Interacts with CSRP1. Interacts with ZCCHC4. Expressed in the spinal cord, brain, paraspinal ganglia, thyroid, and submandibular glands.

It localises to the nucleus. The protein resides in the nucleus speckle. In terms of biological role, plays a role in DNA damage repair as component of the ASCC complex. Part of the ASC-1 complex that enhances NF-kappa-B, SRF and AP1 transactivation. In cells responding to gastrin-activated paracrine signals, it is involved in the induction of SERPINB2 expression by gastrin. May also play a role in the development of neuromuscular junction. The polypeptide is Activating signal cointegrator 1 complex subunit 1 (Ascc1) (Mus musculus (Mouse)).